The following is a 732-amino-acid chain: Catalase-peroxidase (732 aa).

Over residues 1–11 the composition is skewed to basic and acidic residues; sequence MDAKTDDKDGG. The disordered stretch occupies residues 1 to 24; the sequence is MDAKTDDKDGGKCPFPHGGGRGRR. Positions 97–219 form a cross-link, tryptophyl-tyrosyl-methioninium (Trp-Tyr) (with M-245); it reads WHSAGTYRTT…LGAVQMGLIY (123 aa). H98 acts as the Proton acceptor in catalysis. Residues 219–245 constitute a cross-link (tryptophyl-tyrosyl-methioninium (Tyr-Met) (with W-97)); it reads YVNPEGPNGNPDPVAAAKDIRETFARM. H260 is a heme b binding site.

Belongs to the peroxidase family. Peroxidase/catalase subfamily. Homodimer or homotetramer. Heme b serves as cofactor. In terms of processing, formation of the three residue Trp-Tyr-Met cross-link is important for the catalase, but not the peroxidase activity of the enzyme.

It carries out the reaction H2O2 + AH2 = A + 2 H2O. The catalysed reaction is 2 H2O2 = O2 + 2 H2O. Its function is as follows. Bifunctional enzyme with both catalase and broad-spectrum peroxidase activity. The sequence is that of Catalase-peroxidase from Rhodopseudomonas palustris (strain HaA2).